The primary structure comprises 118 residues: Ribonuclease P protein component (118 aa).

Belongs to the RnpA family. As to quaternary structure, consists of a catalytic RNA component (M1 or rnpB) and a protein subunit.

It carries out the reaction Endonucleolytic cleavage of RNA, removing 5'-extranucleotides from tRNA precursor.. In terms of biological role, RNaseP catalyzes the removal of the 5'-leader sequence from pre-tRNA to produce the mature 5'-terminus. It can also cleave other RNA substrates such as 4.5S RNA. The protein component plays an auxiliary but essential role in vivo by binding to the 5'-leader sequence and broadening the substrate specificity of the ribozyme. This Bifidobacterium animalis subsp. lactis (strain AD011) protein is Ribonuclease P protein component.